Consider the following 252-residue polypeptide: Large ribosomal subunit protein uL10m (252 aa).

The transit peptide at 1–24 (MAATLCCRLLPKAGWVPLTQSVRH) directs the protein to the mitochondrion.

Belongs to the universal ribosomal protein uL10 family. In terms of assembly, component of the mitochondrial ribosome large subunit (39S) which comprises a 16S rRNA and about 50 distinct proteins.

It is found in the mitochondrion. This is Large ribosomal subunit protein uL10m (mrpl10) from Danio rerio (Zebrafish).